The primary structure comprises 410 residues: MAFEKIKVANPIVEMDGDEMTRVIWKSIKDKLITPFVELDIKYFDLGLPHRDATDDKVTIESAEATKKYNVAIKCATITPDEGRVTEFGLKQMWRSPNGTIRNILNGTVFREPIICKNVPKLVPGWTKPICIGRHAFGDQYRATDAVIKGPGKLTMTFEGKDGKTETEVFTFTGEGGVAMAMYNTDESIRAFADASMNTAYEKKWPLYLSTKNTILKKYDGRFKDIFQEVYEASWKSKYDAAGIWYEHRLIDDMVAYALKSEGGYVWACKNYDGDVQSDFLAQGFGSLGLMTSVLVCPDGKTIEAEAAHGTVTRHFRVHQKGGETSTNSIASIFAWTRGLAHRAKLDDNAKLLDFTEKLEAACVGTVESGKMTKDLALIIHGSKLSRDTYLNTEEFIDAVAAELKERLNA.

NADP(+) contacts are provided by residues Thr77 to Thr79 and Arg84. Thr79 provides a ligand contact to substrate. Substrate-binding positions include Ser96–Arg102, Arg111, and Arg134. Lys260 is an NADP(+) binding site. Residues Asp275 and Asp279 each contribute to the Mn(2+) site. Residues Gly310–His315 and Asn328 contribute to the NADP(+) site.

The protein belongs to the isocitrate and isopropylmalate dehydrogenases family. Mg(2+) is required as a cofactor. Mn(2+) serves as cofactor.

It is found in the cytoplasm. Its subcellular location is the cytosol. The catalysed reaction is D-threo-isocitrate + NADP(+) = 2-oxoglutarate + CO2 + NADPH. In terms of biological role, may supply 2-oxoglutarate for amino acid biosynthesis and ammonia assimilation via the glutamine synthetase/glutamate synthase (GS/GOGAT) pathway. May be involved in the production of NADPH to promote redox signaling or homeostasis in response to oxidative stress, or redox signaling linked to defense responses. The protein is Cytosolic isocitrate dehydrogenase [NADP] of Arabidopsis thaliana (Mouse-ear cress).